We begin with the raw amino-acid sequence, 84 residues long: Small ribosomal subunit protein bS20 (84 aa).

This sequence belongs to the bacterial ribosomal protein bS20 family.

Binds directly to 16S ribosomal RNA. The sequence is that of Small ribosomal subunit protein bS20 from Lactiplantibacillus plantarum (strain ATCC BAA-793 / NCIMB 8826 / WCFS1) (Lactobacillus plantarum).